We begin with the raw amino-acid sequence, 739 residues long: MSKQVFETVFAGKKLVVETGQVAKQANGAVVVRYGDSTVLTAAVMSKKMATGDFFPLQVNYEEKMYAAGKFPGGWMKREGRPSTDATLTARLIDRPIRPMFAEGFRNEVQVINTVLSYDPDASAPMAAMFGSSLALAISDIPFNGPIAGVQVGYVNGELIINPDQAQQEASLLELTVAGNKDAINMVESGAKELSEEVMLEALLKGHAAIQELLDFQNQIVAAVGKEKADVELLQVDPELQAEIVAAYNDDLKKAVQVEEKLAREDATNAVRETVIATYEEKYAEHEEFDRIMRDVHEILELMEHTEVRRLITEDKVRPDGRRVDEIRPLDAEVDFLPNVHGSGLFTRGQTQALSVLTLAPMGETQIIDGLDDEYKKRFLHHYNFPQYSVGSTGRYGAPGRREIGHGALGERALEQVLPSLEDFPYAIRLVAEVLESNGSSSQASITAGTLALMAGGVPIKAPVAGIAMGLISDGTNYTVLTDIQGLEDHFGDMDFKVAGTRDGITALQMDIKIDGITPQILEEALAQAKKARFEILDVIEATIPEVRPDLAPTAPKIDTIKIDVDKIKIVIGKGGETIDKIIAETGVKIDIDEDGLVAIFSPDRAAIERTKEIIAGLVREAKVDEVFQAKVVRLEKFGAFVNLFDKTDALVHVSEMAWTRVNKPEDLVEVGDVVDVKVIKIDDKGRIDASMKALLPKPEGYVEPEKRERSEKPRRHKEHKEKKDNNFGEFKFHKVDKK.

Residues D489 and D495 each contribute to the Mg(2+) site. Positions P556–I615 constitute a KH domain. The S1 motif domain maps to D625–K693. Residues P699 to K739 form a disordered region. Basic and acidic residues predominate over residues E722 to K739.

This sequence belongs to the polyribonucleotide nucleotidyltransferase family. Requires Mg(2+) as cofactor.

It localises to the cytoplasm. The catalysed reaction is RNA(n+1) + phosphate = RNA(n) + a ribonucleoside 5'-diphosphate. Its function is as follows. Involved in mRNA degradation. Catalyzes the phosphorolysis of single-stranded polyribonucleotides processively in the 3'- to 5'-direction. This chain is Polyribonucleotide nucleotidyltransferase, found in Streptococcus suis (strain 98HAH33).